We begin with the raw amino-acid sequence, 67 residues long: Small ribosomal subunit protein eS31 (67 aa).

C35, C38, C54, and C57 together coordinate Zn(2+). The C4-type zinc-finger motif lies at 35 to 57 (CPRCGSIMAHHMKPLERWACGKC).

It belongs to the eukaryotic ribosomal protein eS31 family. Part of the 30S ribosomal subunit. The cofactor is Zn(2+).

The sequence is that of Small ribosomal subunit protein eS31 from Sulfolobus acidocaldarius (strain ATCC 33909 / DSM 639 / JCM 8929 / NBRC 15157 / NCIMB 11770).